Reading from the N-terminus, the 579-residue chain is Glypican-2 (579 aa).

The N-terminal stretch at 1-23 is a signal peptide; the sequence is MSALRPLLLLLLPLCPGPGPGPG. O-linked (Xyl...) (heparan sulfate) serine glycans are attached at residues S55, S92, and S155. 2 disordered regions span residues 444-468 and 485-555; these read GGSP…VPTR and ALGH…RSGG. Residues S500 and S502 are each glycosylated (O-linked (Xyl...) (heparan sulfate) serine). Positions 520–529 are enriched in pro residues; the sequence is PARPPRPPYP. Residue G554 is the site of GPI-anchor amidated glycine attachment. A propeptide spans 555–579 (removed in mature form); that stretch reads GASIGFHTQTILILSLSALALLGPR.

The protein belongs to the glypican family. As to quaternary structure, interacts (via heparan sulfate) with PTN; this interaction promotes neurite outgrowth through binding of PTN with chondroitin sulfate of proteoglycans, thereby releasing PTPRS of chondroitin sulfate proteoglycans (CSPGs) and leading to binding with heparan sulfate of GPC2. Interacts (heparan sulfate chain) with MDK; this interaction is inhibited by heparin followed by chondroitin sulfate E; this interaction induces GPC2 clustering through heparan sulfate chain; this interaction induces neuronal cell adhesion and neurite outgrowth.

The protein localises to the cell membrane. Its subcellular location is the secreted. The protein resides in the extracellular space. Cell surface proteoglycan that bears heparan sulfate. May fulfill a function related to the motile behaviors of developing neurons. The polypeptide is Glypican-2 (GPC2) (Homo sapiens (Human)).